The following is a 77-amino-acid chain: RNA-binding protein Hfq (77 aa).

The region spanning 10 to 70 is the Sm domain; that stretch reads DAFLNHVRKA…ISTIMPGQPI (61 aa).

The protein belongs to the Hfq family. As to quaternary structure, homohexamer.

RNA chaperone that binds small regulatory RNA (sRNAs) and mRNAs to facilitate mRNA translational regulation in response to envelope stress, environmental stress and changes in metabolite concentrations. Also binds with high specificity to tRNAs. This is RNA-binding protein Hfq from Cereibacter sphaeroides (strain ATCC 17029 / ATH 2.4.9) (Rhodobacter sphaeroides).